The following is a 188-amino-acid chain: HTH-type transcriptional repressor AcnR (188 aa).

The HTH tetR-type domain occupies 10 to 70; the sequence is TNSRQEILEG…ALAREDAARM (61 aa). Residues 33–52 constitute a DNA-binding region (H-T-H motif); that stretch reads TVRRLEEATGKSRGAIFHHF. Residues 79–80, Arg-130, and Asn-134 contribute to the citrate site; that span reads LV. Glu-181 is a binding site for Mg(2+). Residue Arg-185 participates in citrate binding.

In terms of assembly, homodimer.

In terms of biological role, acnR negatively controls the expression of the aconitase gene acn. Binds to the imperfect inverted repeat in the acn promoter region. The protein is HTH-type transcriptional repressor AcnR of Corynebacterium glutamicum (strain ATCC 13032 / DSM 20300 / JCM 1318 / BCRC 11384 / CCUG 27702 / LMG 3730 / NBRC 12168 / NCIMB 10025 / NRRL B-2784 / 534).